A 471-amino-acid polypeptide reads, in one-letter code: Arginine biosynthesis bifunctional protein ArgJ, mitochondrial (471 aa).

6 residues coordinate substrate: Thr-190, Lys-216, Thr-239, Glu-327, Asn-466, and Ser-471. Thr-239 (nucleophile) is an active-site residue.

Belongs to the ArgJ family. Heterodimer of an alpha and a beta chain. Post-translationally, the alpha and beta chains are autoproteolytically processed from a single precursor protein within the mitochondrion.

The protein resides in the mitochondrion matrix. It carries out the reaction N(2)-acetyl-L-ornithine + L-glutamate = N-acetyl-L-glutamate + L-ornithine. It catalyses the reaction L-glutamate + acetyl-CoA = N-acetyl-L-glutamate + CoA + H(+). Its pathway is amino-acid biosynthesis; L-arginine biosynthesis; L-ornithine and N-acetyl-L-glutamate from L-glutamate and N(2)-acetyl-L-ornithine (cyclic): step 1/1. It participates in amino-acid biosynthesis; L-arginine biosynthesis; N(2)-acetyl-L-ornithine from L-glutamate: step 1/4. Catalyzes two activities which are involved in the cyclic version of arginine biosynthesis: the synthesis of acetylglutamate from glutamate and acetyl-CoA, and of ornithine by transacetylation between acetylornithine and glutamate. This is Arginine biosynthesis bifunctional protein ArgJ, mitochondrial from Coprinopsis cinerea (strain Okayama-7 / 130 / ATCC MYA-4618 / FGSC 9003) (Inky cap fungus).